We begin with the raw amino-acid sequence, 271 residues long: 3-methyl-2-oxobutanoate hydroxymethyltransferase (271 aa).

Mg(2+) is bound by residues Asp53 and Asp92. 3-methyl-2-oxobutanoate-binding positions include 53–54 (DS), Asp92, and Lys120. Glu122 provides a ligand contact to Mg(2+). The active-site Proton acceptor is Glu189.

It belongs to the PanB family. As to quaternary structure, homodecamer; pentamer of dimers. Requires Mg(2+) as cofactor.

It is found in the cytoplasm. The catalysed reaction is 3-methyl-2-oxobutanoate + (6R)-5,10-methylene-5,6,7,8-tetrahydrofolate + H2O = 2-dehydropantoate + (6S)-5,6,7,8-tetrahydrofolate. Its pathway is cofactor biosynthesis; (R)-pantothenate biosynthesis; (R)-pantoate from 3-methyl-2-oxobutanoate: step 1/2. In terms of biological role, catalyzes the reversible reaction in which hydroxymethyl group from 5,10-methylenetetrahydrofolate is transferred onto alpha-ketoisovalerate to form ketopantoate. The chain is 3-methyl-2-oxobutanoate hydroxymethyltransferase from Paraburkholderia xenovorans (strain LB400).